A 227-amino-acid chain; its full sequence is UPF0173 metal-dependent hydrolase STK_14180 (227 aa).

Belongs to the UPF0173 family.

This Sulfurisphaera tokodaii (strain DSM 16993 / JCM 10545 / NBRC 100140 / 7) (Sulfolobus tokodaii) protein is UPF0173 metal-dependent hydrolase STK_14180.